Consider the following 244-residue polypeptide: DNA repair protein RecO (244 aa).

It belongs to the RecO family.

Functionally, involved in DNA repair and RecF pathway recombination. The protein is DNA repair protein RecO of Caldicellulosiruptor saccharolyticus (strain ATCC 43494 / DSM 8903 / Tp8T 6331).